The sequence spans 346 residues: Leucine zipper protein 2 (346 aa).

A signal peptide spans methionine 1–serine 19. A coiled-coil region spans residues leucine 16–glutamine 211. Asparagine 133 carries N-linked (GlcNAc...) asparagine glycosylation. Residues leucine 164–leucine 192 are leucine-zipper. The tract at residues alanine 225 to leucine 346 is disordered. Residues alanine 250–serine 261 are compositionally biased toward low complexity. Positions glycine 262–aspartate 283 are enriched in polar residues. N-linked (GlcNAc...) asparagine glycosylation is present at asparagine 264. Residues aspartate 286 to serine 298 show a composition bias toward basic and acidic residues. N-linked (GlcNAc...) asparagine glycosylation is present at asparagine 302.

The protein resides in the secreted. This Pongo abelii (Sumatran orangutan) protein is Leucine zipper protein 2 (LUZP2).